Here is a 356-residue protein sequence, read N- to C-terminus: S-adenosylmethionine:tRNA ribosyltransferase-isomerase (356 aa).

Belongs to the QueA family. Monomer.

Its subcellular location is the cytoplasm. The enzyme catalyses 7-aminomethyl-7-carbaguanosine(34) in tRNA + S-adenosyl-L-methionine = epoxyqueuosine(34) in tRNA + adenine + L-methionine + 2 H(+). It participates in tRNA modification; tRNA-queuosine biosynthesis. Its function is as follows. Transfers and isomerizes the ribose moiety from AdoMet to the 7-aminomethyl group of 7-deazaguanine (preQ1-tRNA) to give epoxyqueuosine (oQ-tRNA). In Escherichia coli (strain ATCC 8739 / DSM 1576 / NBRC 3972 / NCIMB 8545 / WDCM 00012 / Crooks), this protein is S-adenosylmethionine:tRNA ribosyltransferase-isomerase.